The chain runs to 308 residues: Ribonuclease HIII (308 aa).

An RNase H type-2 domain is found at 92 to 308 (DNHIGSDEAG…ANTQKAQKLL (217 aa)). A divalent metal cation contacts are provided by Asp-98, Glu-99, and Asp-204.

Belongs to the RNase HII family. RnhC subfamily. Requires Mn(2+) as cofactor. It depends on Mg(2+) as a cofactor.

The protein resides in the cytoplasm. The catalysed reaction is Endonucleolytic cleavage to 5'-phosphomonoester.. Its function is as follows. Endonuclease that specifically degrades the RNA of RNA-DNA hybrids. The sequence is that of Ribonuclease HIII from Oceanobacillus iheyensis (strain DSM 14371 / CIP 107618 / JCM 11309 / KCTC 3954 / HTE831).